Here is a 1396-residue protein sequence, read N- to C-terminus: DNA-directed RNA polymerase subunit beta' (1396 aa).

Positions 72, 74, 87, and 90 each coordinate Zn(2+). Mg(2+) contacts are provided by D463, D465, and D467. Zn(2+) is bound by residues C814, C889, C896, and C899.

This sequence belongs to the RNA polymerase beta' chain family. In terms of assembly, the RNAP catalytic core consists of 2 alpha, 1 beta, 1 beta' and 1 omega subunit. When a sigma factor is associated with the core the holoenzyme is formed, which can initiate transcription. It depends on Mg(2+) as a cofactor. Requires Zn(2+) as cofactor.

It carries out the reaction RNA(n) + a ribonucleoside 5'-triphosphate = RNA(n+1) + diphosphate. In terms of biological role, DNA-dependent RNA polymerase catalyzes the transcription of DNA into RNA using the four ribonucleoside triphosphates as substrates. The protein is DNA-directed RNA polymerase subunit beta' of Chlamydia muridarum (strain MoPn / Nigg).